Here is a 266-residue protein sequence, read N- to C-terminus: Type III pantothenate kinase (266 aa).

Aspartate 6 to valine 13 is an ATP binding site. Substrate is bound by residues tyrosine 100 and glycine 107–arginine 110. Aspartate 109 (proton acceptor) is an active-site residue. Aspartate 129 is a binding site for K(+). Threonine 132 contacts ATP. Threonine 184 serves as a coordination point for substrate.

Belongs to the type III pantothenate kinase family. Homodimer. NH4(+) is required as a cofactor. The cofactor is K(+).

Its subcellular location is the cytoplasm. The enzyme catalyses (R)-pantothenate + ATP = (R)-4'-phosphopantothenate + ADP + H(+). Its pathway is cofactor biosynthesis; coenzyme A biosynthesis; CoA from (R)-pantothenate: step 1/5. Its function is as follows. Catalyzes the phosphorylation of pantothenate (Pan), the first step in CoA biosynthesis. The chain is Type III pantothenate kinase from Clostridium beijerinckii (strain ATCC 51743 / NCIMB 8052) (Clostridium acetobutylicum).